A 1946-amino-acid chain; its full sequence is Chromodomain-helicase-DNA-binding protein 5 (1946 aa).

3 disordered regions span residues 1–140 (MRGP…SGQL), 236–272 (VPQTLPIRKAKTKEGKGPGVRKKNKGAKDSKKKGRGK), and 285–340 (SKRK…GDGY). Composition is skewed to acidic residues over residues 17-37 (EEMENEEEMSEEEDGGLEGFE) and 72-90 (NDEMSDNEEDLEEKSESEG). Basic residues-rich tracts occupy residues 96–118 (TKKKKKKLKEKKEKKEKKEKRKK) and 254–272 (GVRKKNKGAKDSKKKGRGK). Positions 293-303 (SEEDEREDSDL) are enriched in acidic residues. A compositionally biased stretch (basic residues) spans 323–332 (KKNKRRRKKK). 2 PHD-type zinc fingers span residues 345–392 (QDYC…CEKE) and 418–465 (MEFC…CTCP). The segment at 345 to 655 (QDYCEVCQQG…HRELMLGEDA (311 aa)) is histone-binding. The Chromo 1 domain maps to 499 to 556 (MPPPRPLEGIPEREFFVKWAGLSYWHCSWVKELQLELYHTVMYRNYQRKNDMDEPPPF). The tract at residues 551–573 (DEPPPFDYGSGDEDGKSEKRKNK) is disordered. Over residues 563–573 (EDGKSEKRKNK) the composition is skewed to basic and acidic residues. The region spanning 594–655 (MMVHRILNHS…HRELMLGEDA (62 aa)) is the Chromo 2 domain. The region spanning 714-898 (RFSWAQGTDT…FHLLNFLTPE (185 aa)) is the Helicase ATP-binding domain. 727 to 734 (DEMGLGKT) serves as a coordination point for ATP. The short motif at 849 to 852 (DEAH) is the DEAH box element. The 166-residue stretch at 1030–1195 (LLQKMLKKLR…MTKQELDDIL (166 aa)) folds into the Helicase C-terminal domain. 5 disordered regions span residues 1210–1254 (MMSQ…VEDS), 1353–1413 (YNDA…LPPL), 1525–1566 (KYST…APLG), 1579–1696 (DEKE…EDKN), and 1926–1946 (SFPAEPSHLPNPRGREKLQPF). Over residues 1212 to 1230 (SQGQRPTTPIPDIQSTKGG) the composition is skewed to polar residues. Acidic residues-rich tracts occupy residues 1357–1368 (SQEDQEWQDELS) and 1378–1387 (SEDEDEDFEE). Gln1392 bears the N5-methylglutamine mark. Residues 1551–1564 (TPVPASPAQLPPAP) are compositionally biased toward pro residues. Phosphoserine is present on Ser1556. Composition is skewed to basic and acidic residues over residues 1602–1629 (DRVEGEDKHQSSDSKDRAREERTEEVEK), 1637–1654 (PLKEEVLPDKEPIPDKPE), and 1661–1676 (GDFRPDDPKTEEKEPG).

Belongs to the SNF2/RAD54 helicase family. Component of the nucleosome remodeling and deacetylase (NuRD) repressor complex, composed of core proteins MTA1, MTA2, MTA3, RBBP4, RBBP7, HDAC1, HDAC2, MBD2, MBD3, and peripherally associated proteins CDK2AP1, CDK2AP2, GATAD2A, GATAD2B, CHD3, CHD4 and CHD5. The exact stoichiometry of the NuRD complex is unknown, and some subunits such as MBD2 and MBD3, GATAD2A and GATAD2B, and CHD3, CHD4 and CHD5 define mutually exclusive NuRD complexes. Interacts with HDAC2. Post-translationally, methylated at Gln-1392 by N6AMT1. In terms of tissue distribution, specifically expressed by neurons in brain, retina and adrenal gland (at protein level). Also detected in testis.

It localises to the nucleus. It is found in the chromosome. It carries out the reaction ATP + H2O = ADP + phosphate + H(+). Its function is as follows. ATP-dependent chromatin-remodeling factor that binds DNA through histones and regulates gene transcription. May specifically recognize and bind trimethylated 'Lys-27' (H3K27me3) and non-methylated 'Lys-4' of histone H3. Acts as a component of the histone deacetylase NuRD complex which participates in the remodeling of chromatin. Plays a role in the development of the nervous system by activating the expression of genes promoting neuron terminal differentiation. In parallel, it may also positively regulate the trimethylation of histone H3 at 'Lys-27' thereby specifically repressing genes that promote the differentiation into non-neuronal cell lineages. Regulates the expression of genes involved in cell proliferation and differentiation. Downstream activated genes may include CDKN2A that positively regulates the p53/TP53 pathway, which in turn, prevents cell proliferation. In spermatogenesis, it probably regulates histone hyperacetylation and the replacement of histones by transition proteins in chromatin, a crucial step in the condensation of spermatid chromatin and the production of functional spermatozoa. This is Chromodomain-helicase-DNA-binding protein 5 (Chd5) from Mus musculus (Mouse).